The sequence spans 280 residues: Transmembrane protein 45B (280 aa).

Helical transmembrane passes span 7-27 (HALPGSFFLVFGLWWSVKYPL), 49-69 (LIEGILKAAFALIGILAEQFV), 96-116 (MYLFYGISGVVDILTFLPLNL), 120-140 (LDRLSLGIAVIIEGLLFYYHV), 150-170 (IHSLLLIAVFGGAISIMIEVF), 184-204 (LTILQGTWFWQIGFVLYPLGG), and 216-236 (VMFITMCFCWHYAVALLIMAI).

Belongs to the TMEM45 family.

The protein resides in the membrane. The sequence is that of Transmembrane protein 45B (tmem45b) from Xenopus tropicalis (Western clawed frog).